A 391-amino-acid chain; its full sequence is MTKKIKTLNLNFGPQHPAAHGVLRLILELDGEVVEKADPHIGLLHRGTEKLIENKTYMQAVPYFDRLDYVAPMNQEHAFALAIEKILKINVPIRAQLIRVMFCEIGRILSHILNVTTQALDVGALTPSLWGFEERETLMTFYERASGSRLHANYFRAGGVHQDLPMGLAEDIGNFCESFPKIIDDLETLLTDNRIFKQRNVDIGIVTKEDALDYSFSGVMIRGSGVPWDLRKSQPYDCYEQLEFKIPVGKNGDCFDRYLCRIEEMRESVSIIKQCLSKMEKGPIKSLDGKISPPPKKDIKQSMEALIHHFKLFTEGYRVDKDEIYTAVEAPKGEFGVYLISDGTSKPYKCKIRAPGFSHLQAMDYLIKGHMLADVPAVLGSLDIVFGEVDR.

This sequence belongs to the complex I 49 kDa subunit family. As to quaternary structure, NDH-1 is composed of 14 different subunits. Subunits NuoB, C, D, E, F, and G constitute the peripheral sector of the complex.

It is found in the cell inner membrane. The catalysed reaction is a quinone + NADH + 5 H(+)(in) = a quinol + NAD(+) + 4 H(+)(out). In terms of biological role, NDH-1 shuttles electrons from NADH, via FMN and iron-sulfur (Fe-S) centers, to quinones in the respiratory chain. The immediate electron acceptor for the enzyme in this species is believed to be ubiquinone. Couples the redox reaction to proton translocation (for every two electrons transferred, four hydrogen ions are translocated across the cytoplasmic membrane), and thus conserves the redox energy in a proton gradient. This Pelagibacter ubique (strain HTCC1062) protein is NADH-quinone oxidoreductase subunit D.